A 506-amino-acid chain; its full sequence is Galactose/methyl galactoside import ATP-binding protein MglA (506 aa).

ABC transporter domains lie at L14–S249 and V264–L506. ATP is bound at residue G46–S53.

Belongs to the ABC transporter superfamily. Galactose/methyl galactoside importer (TC 3.A.1.2.3) family. As to quaternary structure, the complex is composed of one ATP-binding protein (MglA), two transmembrane proteins (MglC) and a solute-binding protein (MglB).

Its subcellular location is the cell inner membrane. It catalyses the reaction D-galactose(out) + ATP + H2O = D-galactose(in) + ADP + phosphate + H(+). It carries out the reaction methyl beta-D-galactoside(out) + ATP + H2O = methyl beta-D-galactoside(in) + ADP + phosphate + H(+). Its function is as follows. Part of the ABC transporter complex MglABC involved in galactose/methyl galactoside import. Responsible for energy coupling to the transport system. This Shigella boydii serotype 4 (strain Sb227) protein is Galactose/methyl galactoside import ATP-binding protein MglA.